The primary structure comprises 71 residues: Omega-conotoxin SO-3 (71 aa).

A signal peptide spans 1 to 22 (MKLTCMVIVAVLLLTACQLITA). The propeptide occupies 23-45 (DDSRGTQKHRTLRSKTKLSMSTR). 3 cysteine pairs are disulfide-bonded: Cys-46–Cys-61, Cys-53–Cys-65, and Cys-60–Cys-70. Cys-70 carries the post-translational modification Cysteine amide.

It belongs to the conotoxin O1 superfamily. As to expression, expressed by the venom duct.

It localises to the secreted. Functionally, omega-conotoxins act at presynaptic membranes, they bind and block voltage-gated calcium channels (Cav). This peptide selectively targets Cav2.2/CACNA1B (IC(50)=160 nM) voltage-gated calcium channels. When tested in mammals, this toxin displays an analgesic potency similar to MVIIA in a range of acute and chronic pain models in rodents, but has less adverse effects (tremor, diminution of spontaneous locomotor activity and bad coordinated locomotion) compared with identical dosages of MVIIA injected intrathecally. This chain is Omega-conotoxin SO-3, found in Conus striatus (Striated cone).